The following is a 63-amino-acid chain: uncharacterized protein (63 aa).

Residues 1-21 form the signal peptide; it reads MYLSLLLILLAWTLWLGNSLA.

This is an uncharacterized protein from Haemophilus influenzae (strain ATCC 51907 / DSM 11121 / KW20 / Rd).